The primary structure comprises 335 residues: Nuclear distribution protein nudE homolog 1 (335 aa).

Residues Met-1–Ile-93 are self-association. Positions Trp-18–Lys-188 form a coiled coil. Residues Glu-88–Leu-156 are interaction with PAFAH1B1. The interaction with CENPF stretch occupies residues Gln-167–Ala-290. The segment at Ala-181–Thr-246 is disordered. Over residues Thr-204 to Ser-214 the composition is skewed to polar residues. Ser-211 carries the post-translational modification Phosphoserine. Phosphothreonine is present on residues Thr-215 and Thr-228. 2 positions are modified to phosphoserine: Ser-231 and Ser-239. Phosphothreonine occurs at positions 243 and 246. A lipid anchor (S-palmitoyl cysteine; by ZDHHC2, ZDHHC3 and ZDHHC7) is attached at Cys-274. A disordered region spans residues Tyr-279–Cys-335. Phosphoserine is present on Ser-282. Residues Lys-296–Pro-305 show a composition bias toward basic and acidic residues. Phosphoserine is present on Ser-309. The span at Ser-325–Cys-335 shows a compositional bias: low complexity.

It belongs to the nudE family. In terms of assembly, homodimer. Interacts with CNTRL, LIS1, dynein, SLMAP and TCP1. Interacts with CENPF, dynactin, tubulin gamma, PAFAH1B1, PCM1 and PCNT. Interacts with ZNF365. Interacts with GTP-bound RAB9A and RAB9B; the interaction leads to RAB9-dynein motor tethering. Interacts (via C-terminus) with MCRS1 (via C-terminus); phosphorylation of NDE1 inhibits the interaction. Post-translationally, phosphorylated in mitosis. Phosphorylated in vitro by CDC2. Phosphorylation at Thr-246 is essential for the G2/M transition. In terms of tissue distribution, expressed in the neuroepithelium throughout the developing brain, including the cerebral cortex and cerebellum.

It localises to the cytoplasm. The protein resides in the cytoskeleton. The protein localises to the microtubule organizing center. Its subcellular location is the centrosome. It is found in the chromosome. It localises to the centromere. The protein resides in the kinetochore. The protein localises to the spindle. Its subcellular location is the cleavage furrow. It is found in the cytoplasmic vesicle membrane. Its function is as follows. Required for centrosome duplication and formation and function of the mitotic spindle. Essential for the development of the cerebral cortex. May regulate the production of neurons by controlling the orientation of the mitotic spindle during division of cortical neuronal progenitors of the proliferative ventricular zone of the brain. Orientation of the division plane perpendicular to the layers of the cortex gives rise to two proliferative neuronal progenitors whereas parallel orientation of the division plane yields one proliferative neuronal progenitor and a postmitotic neuron. A premature shift towards a neuronal fate within the progenitor population may result in an overall reduction in the final number of neurons and an increase in the number of neurons in the deeper layers of the cortex. Acts as a RAB9A/B effector that tethers RAB9-associated late endosomes to the dynein motor for their retrograde transport to the trans-Golgi network. In Homo sapiens (Human), this protein is Nuclear distribution protein nudE homolog 1.